Here is a 211-residue protein sequence, read N- to C-terminus: Protein DEHYDRATION-INDUCED 19 homolog 7 (211 aa).

At threonine 113 the chain carries Phosphothreonine. Positions 163-194 (GDSVAQVSPKDTSKSKIQQESFSNEDQEKAKK) are disordered. Residues 167 to 186 (AQVSPKDTSKSKIQQESFSN) are compositionally biased toward polar residues.

Belongs to the Di19 family. Not phosphorylated in vitro by CPK3 or CPK11. As to expression, expressed in seedlings, roots, leaves, stems, flowers and siliques.

Its subcellular location is the nucleus. Functionally, involved in both red and blue light signaling. The polypeptide is Protein DEHYDRATION-INDUCED 19 homolog 7 (DI19-7) (Arabidopsis thaliana (Mouse-ear cress)).